The following is a 240-amino-acid chain: Uridylate kinase (240 aa).

Lysine 12–glycine 15 is an ATP binding site. The involved in allosteric activation by GTP stretch occupies residues glycine 20 to glycine 25. Glycine 54 is a UMP binding site. ATP-binding residues include glycine 55 and arginine 59. UMP-binding positions include aspartate 74 and threonine 135–threonine 142. ATP-binding residues include asparagine 163, tyrosine 169, and aspartate 172.

The protein belongs to the UMP kinase family. As to quaternary structure, homohexamer.

Its subcellular location is the cytoplasm. It catalyses the reaction UMP + ATP = UDP + ADP. It functions in the pathway pyrimidine metabolism; CTP biosynthesis via de novo pathway; UDP from UMP (UMPK route): step 1/1. Its activity is regulated as follows. Allosterically activated by GTP. Inhibited by UTP. In terms of biological role, catalyzes the reversible phosphorylation of UMP to UDP. This is Uridylate kinase from Bacillus licheniformis (strain ATCC 14580 / DSM 13 / JCM 2505 / CCUG 7422 / NBRC 12200 / NCIMB 9375 / NCTC 10341 / NRRL NRS-1264 / Gibson 46).